The following is a 252-amino-acid chain: Iron-sulfur cluster co-chaperone protein HscB homolog (252 aa).

The transit peptide at 1–59 (MKKTKTMVASISTLIRRTYPSTNQCNSLATIQSQTQLPRESLQHHSSAEGRLRFSGRVF) directs the protein to the mitochondrion. Residues 93-165 (DYFQIFGLEK…LSRAMYIMKL (73 aa)) form the J domain.

Belongs to the HscB family. In terms of assembly, interacts with ISU1 and HSP70-9/HSCA1.

It is found in the mitochondrion. It localises to the cytoplasm. The protein resides in the cytosol. Its function is as follows. Co-chaperone required for the assembly of iron-sulfur [Fe-S] clusters in both mitochondria and cytosol. Required for the activity of iron-sulfur proteins such as aconitase and succinate dehydrogenase. Involved in iron homeostasis and may take part in the control of iron translocation from roots to shoots. The protein is Iron-sulfur cluster co-chaperone protein HscB homolog of Arabidopsis thaliana (Mouse-ear cress).